The primary structure comprises 252 residues: 2-succinyl-6-hydroxy-2,4-cyclohexadiene-1-carboxylate synthase (252 aa).

This sequence belongs to the AB hydrolase superfamily. MenH family. As to quaternary structure, monomer.

The catalysed reaction is 5-enolpyruvoyl-6-hydroxy-2-succinyl-cyclohex-3-ene-1-carboxylate = (1R,6R)-6-hydroxy-2-succinyl-cyclohexa-2,4-diene-1-carboxylate + pyruvate. It functions in the pathway quinol/quinone metabolism; 1,4-dihydroxy-2-naphthoate biosynthesis; 1,4-dihydroxy-2-naphthoate from chorismate: step 3/7. The protein operates within quinol/quinone metabolism; menaquinone biosynthesis. In terms of biological role, catalyzes a proton abstraction reaction that results in 2,5-elimination of pyruvate from 2-succinyl-5-enolpyruvyl-6-hydroxy-3-cyclohexene-1-carboxylate (SEPHCHC) and the formation of 2-succinyl-6-hydroxy-2,4-cyclohexadiene-1-carboxylate (SHCHC). The polypeptide is 2-succinyl-6-hydroxy-2,4-cyclohexadiene-1-carboxylate synthase (Citrobacter koseri (strain ATCC BAA-895 / CDC 4225-83 / SGSC4696)).